The sequence spans 397 residues: Phosphopentomutase (397 aa).

Aspartate 12, aspartate 289, histidine 294, aspartate 330, histidine 331, and histidine 342 together coordinate Mn(2+).

This sequence belongs to the phosphopentomutase family. Requires Mn(2+) as cofactor.

The protein resides in the cytoplasm. The catalysed reaction is 2-deoxy-alpha-D-ribose 1-phosphate = 2-deoxy-D-ribose 5-phosphate. It carries out the reaction alpha-D-ribose 1-phosphate = D-ribose 5-phosphate. It participates in carbohydrate degradation; 2-deoxy-D-ribose 1-phosphate degradation; D-glyceraldehyde 3-phosphate and acetaldehyde from 2-deoxy-alpha-D-ribose 1-phosphate: step 1/2. Functionally, isomerase that catalyzes the conversion of deoxy-ribose 1-phosphate (dRib-1-P) and ribose 1-phosphate (Rib-1-P) to deoxy-ribose 5-phosphate (dRib-5-P) and ribose 5-phosphate (Rib-5-P), respectively. The sequence is that of Phosphopentomutase from Limosilactobacillus reuteri (strain DSM 20016) (Lactobacillus reuteri).